Reading from the N-terminus, the 791-residue chain is RAS guanyl-releasing protein 1 (791 aa).

The N-terminal Ras-GEF domain occupies 49 to 172; it reads LGKLSKGASL…RLIDTAQINS (124 aa). The tract at residues 53 to 106 is ras exchanger motif region; required for transforming activity; it reads SKGASLDELIQMCIQAFDLDGNMGQNNELLQIMLTMHGFLIPSTELLIKLRTLY. The Ras-GEF domain occupies 201-432; the sequence is EPQELAEHLT…YELSYAREPR (232 aa). EF-hand domains follow at residues 466–501 and 502–528; these read HVQR…FPFS and FCVM…ASSI. Residues aspartate 479, aspartate 481, aspartate 483, tyrosine 485, glutamate 490, aspartate 506, aspartate 508, glutamate 510, and glutamate 517 each contribute to the Ca(2+) site. The Phorbol-ester/DAG-type zinc finger occupies 537 to 587; the sequence is LHNFQETTYLRPTFCDNCAGFLWGVIKQGYRCKDCGMNCHKQCKELVVFEC. The segment at 671–715 is disordered; the sequence is TQTENETQSLCLQVPSPPRSRTPDLTSHLPISPMPSPCPSPVPTR. The span at 672–681 shows a compositional bias: polar residues; that stretch reads QTENETQSLC. Over residues 702-712 the composition is skewed to pro residues; the sequence is SPMPSPCPSPV. Residues 728-783 are a coiled coil; sequence IRKARAELRGGKAGIQELEKEKVFLKEENTALKIQLKDAHRRVETLRAELRKYVLD.

The protein belongs to the RASGRP family.

Its subcellular location is the cytoplasm. The protein localises to the cytosol. It is found in the cell membrane. The protein resides in the golgi apparatus membrane. It localises to the endoplasmic reticulum membrane. Regulated by F-actin polymerization and probably by calcium. Functions as a diacylglycerol (DAG)-regulated nucleotide exchange factor specifically activating Ras through the exchange of bound GDP for GTP. The protein is RAS guanyl-releasing protein 1 (rasgrp1) of Xenopus laevis (African clawed frog).